A 465-amino-acid polypeptide reads, in one-letter code: Pancreatic triacylglycerol lipase (465 aa).

The N-terminal stretch at 1–16 is a signal peptide; the sequence is MLMLWTFAVLLGAVAG. 2 cysteine pairs are disulfide-bonded: Cys-20–Cys-26 and Cys-107–Cys-118. The active-site Nucleophile is Ser-169. Asp-193 acts as the Charge relay system in catalysis. Ca(2+)-binding residues include Glu-204, Arg-207, Asp-209, and Asp-212. Cys-254 and Cys-278 are disulfide-bonded. His-280 acts as the Charge relay system in catalysis. 3 disulfides stabilise this stretch: Cys-302-Cys-313, Cys-316-Cys-321, and Cys-449-Cys-465. Residues 355-465 form the PLAT domain; the sequence is WRYQVTVTLS…EDVLLTLSPC (111 aa).

It belongs to the AB hydrolase superfamily. Lipase family. Forms a 1:1 stoichiometric complex with (pro)colipase/CLPS. In terms of tissue distribution, pancreas.

Its subcellular location is the secreted. It carries out the reaction a triacylglycerol + H2O = a diacylglycerol + a fatty acid + H(+). It catalyses the reaction 1,2,3-tri-(9Z-octadecenoyl)-glycerol + H2O = di-(9Z)-octadecenoylglycerol + (9Z)-octadecenoate + H(+). The enzyme catalyses 1,2,3-tributanoylglycerol + H2O = dibutanoylglycerol + butanoate + H(+). The catalysed reaction is all-trans-retinyl hexadecanoate + H2O = all-trans-retinol + hexadecanoate + H(+). It carries out the reaction 1,2-di-(9Z-octadecenoyl)-glycerol + H2O = (9Z-octadecenoyl)-glycerol + (9Z)-octadecenoate + H(+). Inhibited by bile salts, is reactivated by (pro)colipase/CLPS. Its function is as follows. Plays an important role in fat metabolism. It preferentially splits the esters of long-chain fatty acids at positions 1 and 3, producing mainly 2-monoacylglycerol and free fatty acids, and shows considerably higher activity against insoluble emulsified substrates than against soluble ones. The sequence is that of Pancreatic triacylglycerol lipase from Mus musculus (Mouse).